We begin with the raw amino-acid sequence, 274 residues long: Putative pyruvate, phosphate dikinase regulatory protein (274 aa).

Gly149–Thr156 contributes to the ADP binding site.

Belongs to the pyruvate, phosphate/water dikinase regulatory protein family. PDRP subfamily.

The catalysed reaction is N(tele)-phospho-L-histidyl/L-threonyl-[pyruvate, phosphate dikinase] + ADP = N(tele)-phospho-L-histidyl/O-phospho-L-threonyl-[pyruvate, phosphate dikinase] + AMP + H(+). It catalyses the reaction N(tele)-phospho-L-histidyl/O-phospho-L-threonyl-[pyruvate, phosphate dikinase] + phosphate + H(+) = N(tele)-phospho-L-histidyl/L-threonyl-[pyruvate, phosphate dikinase] + diphosphate. Bifunctional serine/threonine kinase and phosphorylase involved in the regulation of the pyruvate, phosphate dikinase (PPDK) by catalyzing its phosphorylation/dephosphorylation. The protein is Putative pyruvate, phosphate dikinase regulatory protein of Rhizorhabdus wittichii (strain DSM 6014 / CCUG 31198 / JCM 15750 / NBRC 105917 / EY 4224 / RW1) (Sphingomonas wittichii).